The chain runs to 210 residues: Outer-membrane lipoprotein carrier protein (210 aa).

An N-terminal signal peptide occupies residues 1–22 (MRAFKWALAIGATLALPLTAQA).

The protein belongs to the LolA family. As to quaternary structure, monomer.

Its subcellular location is the periplasm. Participates in the translocation of lipoproteins from the inner membrane to the outer membrane. Only forms a complex with a lipoprotein if the residue after the N-terminal Cys is not an aspartate (The Asp acts as a targeting signal to indicate that the lipoprotein should stay in the inner membrane). This is Outer-membrane lipoprotein carrier protein from Chromohalobacter salexigens (strain ATCC BAA-138 / DSM 3043 / CIP 106854 / NCIMB 13768 / 1H11).